Consider the following 333-residue polypeptide: Electron transfer flavoprotein subunit alpha, mitochondrial (333 aa).

Residues 1–19 constitute a mitochondrion transit peptide; it reads MFRAAAPGQLRRAASLLRF. Residues 20 to 204 are domain I; it reads QSTLVIAEHA…GISEWLDQKL (185 aa). Lys59 is modified (N6-acetyllysine; alternate). N6-succinyllysine; alternate is present on Lys59. At Lys62 the chain carries N6-acetyllysine. An N6-acetyllysine; alternate modification is found at Lys69. At Lys69 the chain carries N6-succinyllysine; alternate. Residue Lys75 is modified to N6-acetyllysine. Position 85 is an N6-acetyllysine; alternate (Lys85). At Lys85 the chain carries N6-succinyllysine; alternate. Position 93 is a phosphothreonine (Thr93). N6-acetyllysine occurs at positions 101 and 139. Phosphoserine is present on Ser140. Lys158 is subject to N6-acetyllysine; alternate. An N6-succinyllysine; alternate modification is found at Lys158. The residue at position 164 (Lys164) is an N6-acetyllysine. The residue at position 187 (Lys187) is an N6-succinyllysine. N6-acetyllysine; alternate is present on Lys203. Lys203 carries the post-translational modification N6-succinyllysine; alternate. A domain II region spans residues 205-333; it reads TKSDRPELTG…PEMTEILKKK (129 aa). At Lys216 the chain carries N6-succinyllysine. Residue Arg223 coordinates FAD. An N6-acetyllysine; alternate mark is found at Lys226 and Lys232. N6-succinyllysine; alternate is present on residues Lys226 and Lys232. FAD contacts are provided by residues Ser248, 263–266, 281–286, and Asn300; these read VGQT and SGAIQH. Lys301 bears the N6-succinyllysine mark. Position 318-319 (318-319) interacts with FAD; the sequence is DL.

Belongs to the ETF alpha-subunit/FixB family. In terms of assembly, heterodimer composed of ETFA and ETFB. Identified in a complex that contains ETFA, ETFB and ETFRF1. Interaction with ETFRF1 promotes dissociation of the bound FAD and loss of electron transfer activity. Interacts with TASOR. FAD is required as a cofactor. Expressed in the spermatogonia, spermatocytes, ovary and granular cells within the cerebellum.

It localises to the mitochondrion matrix. Functionally, heterodimeric electron transfer flavoprotein that accepts electrons from several mitochondrial dehydrogenases, including acyl-CoA dehydrogenases, glutaryl-CoA and sarcosine dehydrogenase. It transfers the electrons to the main mitochondrial respiratory chain via ETF-ubiquinone oxidoreductase (ETF dehydrogenase). Required for normal mitochondrial fatty acid oxidation and normal amino acid metabolism. This Mus musculus (Mouse) protein is Electron transfer flavoprotein subunit alpha, mitochondrial (Etfa).